Consider the following 307-residue polypeptide: Ribosomal RNA small subunit methyltransferase H (307 aa).

Residues 34–36, aspartate 54, phenylalanine 79, aspartate 101, and glutamine 108 each bind S-adenosyl-L-methionine; that span reads GGH.

The protein belongs to the methyltransferase superfamily. RsmH family.

The protein resides in the cytoplasm. It catalyses the reaction cytidine(1402) in 16S rRNA + S-adenosyl-L-methionine = N(4)-methylcytidine(1402) in 16S rRNA + S-adenosyl-L-homocysteine + H(+). Its function is as follows. Specifically methylates the N4 position of cytidine in position 1402 (C1402) of 16S rRNA. In Vesicomyosocius okutanii subsp. Calyptogena okutanii (strain HA), this protein is Ribosomal RNA small subunit methyltransferase H.